Here is a 104-residue protein sequence, read N- to C-terminus: Small ribosomal subunit protein uS10 (104 aa).

This sequence belongs to the universal ribosomal protein uS10 family. In terms of assembly, part of the 30S ribosomal subunit.

Functionally, involved in the binding of tRNA to the ribosomes. The polypeptide is Small ribosomal subunit protein uS10 (Ralstonia nicotianae (strain ATCC BAA-1114 / GMI1000) (Ralstonia solanacearum)).